We begin with the raw amino-acid sequence, 503 residues long: Maturase K (503 aa).

This sequence belongs to the intron maturase 2 family. MatK subfamily.

It is found in the plastid. Its subcellular location is the chloroplast. In terms of biological role, usually encoded in the trnK tRNA gene intron. Probably assists in splicing its own and other chloroplast group II introns. This Rosa foetida (Austrian briar) protein is Maturase K.